Consider the following 192-residue polypeptide: Hydrophobin-like protein rodD (192 aa).

3 disulfides stabilise this stretch: C45-C106, C50-C99, and C107-C112.

The protein belongs to the fungal hydrophobin family. In terms of assembly, self-assembles to form functional amyloid fibrils called rodlets. Self-assembly into fibrillar rodlets occurs spontaneously at hydrophobic:hydrophilic interfaces and the rodlets further associate laterally to form amphipathic monolayers.

Its function is as follows. Aerial growth, conidiation, and dispersal of filamentous fungi in the environment rely upon a capability of their secreting small amphipathic proteins called hydrophobins (HPBs) with low sequence identity. Class I can self-assemble into an outermost layer of rodlet bundles on aerial cell surfaces, conferring cellular hydrophobicity that supports fungal growth, development and dispersal; whereas Class II form highly ordered films at water-air interfaces through intermolecular interactions but contribute nothing to the rodlet structure. RodD is a an hydrophobin-like protein that, unlike rodA, is not required for rodlet formation. This Aspergillus fumigatus (strain ATCC MYA-4609 / CBS 101355 / FGSC A1100 / Af293) (Neosartorya fumigata) protein is Hydrophobin-like protein rodD.